Reading from the N-terminus, the 507-residue chain is Flagellar hook-associated protein 1 (507 aa).

This sequence belongs to the flagella basal body rod proteins family.

It is found in the secreted. The protein localises to the bacterial flagellum. The sequence is that of Flagellar hook-associated protein 1 (flgK) from Bacillus subtilis (strain 168).